The sequence spans 653 residues: UvrABC system protein B (653 aa).

One can recognise a Helicase ATP-binding domain in the interval 25–182; the sequence is EGIERGVREQ…EKLVELQYKS (158 aa). 38–45 serves as a coordination point for ATP; that stretch reads GVTGSGKT. A Beta-hairpin motif is present at residues 91 to 114; it reads YYDYYQPEAYIPHSDVYIEKDALI. The 163-residue stretch at 429-591 folds into the Helicase C-terminal domain; that stretch reads QIADVVNESQ…ITPKSISKSV (163 aa). The region spanning 616-651 is the UVR domain; it reads EEDIIKLQKEMLLHAENLEFEKALEIRNQINKLSQH.

The protein belongs to the UvrB family. Forms a heterotetramer with UvrA during the search for lesions. Interacts with UvrC in an incision complex.

It localises to the cytoplasm. Its function is as follows. The UvrABC repair system catalyzes the recognition and processing of DNA lesions. A damage recognition complex composed of 2 UvrA and 2 UvrB subunits scans DNA for abnormalities. Upon binding of the UvrA(2)B(2) complex to a putative damaged site, the DNA wraps around one UvrB monomer. DNA wrap is dependent on ATP binding by UvrB and probably causes local melting of the DNA helix, facilitating insertion of UvrB beta-hairpin between the DNA strands. Then UvrB probes one DNA strand for the presence of a lesion. If a lesion is found the UvrA subunits dissociate and the UvrB-DNA preincision complex is formed. This complex is subsequently bound by UvrC and the second UvrB is released. If no lesion is found, the DNA wraps around the other UvrB subunit that will check the other stand for damage. In Anaplasma phagocytophilum (strain HZ), this protein is UvrABC system protein B.